Consider the following 459-residue polypeptide: Glutamyl-tRNA reductase (459 aa).

Substrate is bound by residues T47–R50, S140, E145–Q147, and Q151. The active-site Nucleophile is C48. A220–N225 is an NADP(+) binding site.

It belongs to the glutamyl-tRNA reductase family. In terms of assembly, homodimer.

It catalyses the reaction (S)-4-amino-5-oxopentanoate + tRNA(Glu) + NADP(+) = L-glutamyl-tRNA(Glu) + NADPH + H(+). Its pathway is porphyrin-containing compound metabolism; protoporphyrin-IX biosynthesis; 5-aminolevulinate from L-glutamyl-tRNA(Glu): step 1/2. Functionally, catalyzes the NADPH-dependent reduction of glutamyl-tRNA(Glu) to glutamate 1-semialdehyde (GSA). The polypeptide is Glutamyl-tRNA reductase (Psychrobacter arcticus (strain DSM 17307 / VKM B-2377 / 273-4)).